The primary structure comprises 382 residues: Lipid-A-disaccharide synthase (382 aa).

Belongs to the LpxB family.

The catalysed reaction is 2-N,3-O-bis[(3R)-3-hydroxytetradecanoyl]-alpha-D-glucosaminyl 1-phosphate + UDP-2-N,3-O-bis[(3R)-3-hydroxytetradecanoyl]-alpha-D-glucosamine = lipid A disaccharide (E. coli) + UDP + H(+). The enzyme catalyses a lipid X + a UDP-2-N,3-O-bis[(3R)-3-hydroxyacyl]-alpha-D-glucosamine = a lipid A disaccharide + UDP + H(+). It functions in the pathway glycolipid biosynthesis; lipid IV(A) biosynthesis; lipid IV(A) from (3R)-3-hydroxytetradecanoyl-[acyl-carrier-protein] and UDP-N-acetyl-alpha-D-glucosamine: step 5/6. Its function is as follows. Condensation of UDP-2,3-diacylglucosamine and 2,3-diacylglucosamine-1-phosphate to form lipid A disaccharide, a precursor of lipid A, a phosphorylated glycolipid that anchors the lipopolysaccharide to the outer membrane of the cell. This Serratia proteamaculans (strain 568) protein is Lipid-A-disaccharide synthase.